Consider the following 250-residue polypeptide: MSDLTSTILFEHPLNEKMRTWLRMEFLLQQLESQRTLDNIASALTFFRTASDLIDVLERGEVRTDLLKELERQQQKLQLWADMPGVDMSLVDSLRSQLKSRASVLMSAPRIGQSLKEDRLISVVRQRLSIPGGCCSFDLPTLHTWLHQPQEQRNQHIDKLLTSLTPLNQSLTIILNLIRQSGPLRAQISLNGFFQDNAEGADLLRLRLPLDPQLYPQISGHKTRYAIRFLPLDSENGTVPARLSFELACC.

This sequence belongs to the ZapD family. As to quaternary structure, interacts with FtsZ.

It localises to the cytoplasm. In terms of biological role, cell division factor that enhances FtsZ-ring assembly. Directly interacts with FtsZ and promotes bundling of FtsZ protofilaments, with a reduction in FtsZ GTPase activity. This Yersinia enterocolitica serotype O:8 / biotype 1B (strain NCTC 13174 / 8081) protein is Cell division protein ZapD.